Consider the following 581-residue polypeptide: MRTLLTILAAGSLLAHITEDTSDLLQHVKFQSSNFENILTWDGRPESPPDTVYSVQYKTYGEEEWLEKEGCQRITQKSCNLTMETSNLTELYYARVTATDGAGRSATKMTNRFSSLQHTSIKPPDVTCIPKVRSIQMIVHPTYTPIRAQNGHQLTLENIFQDLLYHLKLRINHTYQMHLEGKQREFEFVGLTPDTEFLGTIMICIPNLFKESTPYMCRVKTLPDRTWTYSFSGAFLFSLGFLVAGLCYLSYRYITKPPPPPSSLNVQHILPFRPLQFIQEHTLIPVFDLSGSGGLAQPVQYSEVKVSNPTEPPGPPPRHSLPEIAYLGQPDLPVLRPSGGPPHQALPVLSYAPQAAPEGRPSSYAPQGALEAKPPSYTPQAVSETQLPSYTPRATPDNWPPSYGMCGEGSGRDSPPVTRSGPKHLGTKGQLQKEVPAGSCSPTGLSLQEVTPLAMEDPQEAKSSHQCLRVHTDSDSDSDTIGQREPGTRSSLKGQLPLLSSVQIEGHPGCLPLQTPSLPCSPTDKGPSPWGLLESLVCPSDEDPVSKTEAESPGLQAPDLESPTELDSLFRGLALTVQWES.

The signal sequence occupies residues 1 to 15; it reads MRTLLTILAAGSLLA. At 16–228 the chain is on the extracellular side; that stretch reads HITEDTSDLL…VKTLPDRTWT (213 aa). 2 consecutive Fibronectin type-III domains span residues 18 to 115 and 141 to 221; these read TEDT…RFSS and PTYT…RVKT. Cys71 and Cys79 are joined by a disulfide. Asn80 carries N-linked (GlcNAc...) asparagine glycosylation. Cys128 and Cys217 are oxidised to a cystine. Residues 229–249 form a helical membrane-spanning segment; that stretch reads YSFSGAFLFSLGFLVAGLCYL. At 250–581 the chain is on the cytoplasmic side; that stretch reads SYRYITKPPP…GLALTVQWES (332 aa). Disordered regions lie at residues 354–493 and 539–563; these read QAAP…SSLK and PSDE…LESP. The span at 378 to 389 shows a compositional bias: polar residues; sequence TPQAVSETQLPS. Ser410 and Ser414 each carry phosphoserine. Residues 440-449 are compositionally biased toward polar residues; sequence CSPTGLSLQE.

Belongs to the type II cytokine receptor family. In terms of assembly, heterodimer with IL10RB and with IL20RB. Interacts with FBXW12; the interaction promotes ubiquitination of IL22RA1. Post-translationally, ubiquitinated.

The protein resides in the cell membrane. Component of the receptor for IL20, IL22 and IL24. Component of IL22 receptor formed by IL22RA1 and IL10RB enabling IL22 signaling via JAK/STAT pathways. IL22 also induces activation of MAPK1/MAPK3 and Akt kinases pathways. Component of one of the receptor for IL20 and IL24 formed by IL22RA1 and IL20RB also signaling through STATs activation. Mediates IL24 antiangiogenic activity as well as IL24 inhibitory effect on endothelial cell tube formation and differentiation. This is Interleukin-22 receptor subunit alpha-1 (IL22RA1) from Bos taurus (Bovine).